The sequence spans 240 residues: E3 ubiquitin-protein ligase LubX (240 aa).

U-box domains are found at residues 30-103 (TTPT…QTNY) and 125-198 (EIPD…RKRE).

Post-translationally, ubiquitinated in the presence of host E1 ubiquitin-activating enzyme, E2 ubiquitin-conjugating enzyme and ubiquitin.

Its subcellular location is the secreted. It is found in the host cell. It carries out the reaction S-ubiquitinyl-[E2 ubiquitin-conjugating enzyme]-L-cysteine + [acceptor protein]-L-lysine = [E2 ubiquitin-conjugating enzyme]-L-cysteine + N(6)-ubiquitinyl-[acceptor protein]-L-lysine.. In terms of biological role, effector proteins function to alter host cell physiology and promote bacterial survival in host tissues. This protein is an E3 ubiquitin ligase that interferes with host's ubiquitination pathway. The protein is E3 ubiquitin-protein ligase LubX (lubX) of Legionella pneumophila (strain Paris).